The following is an 803-amino-acid chain: MSFQQPSNGAQGGNNNALEKTSSNEATSSSSTQVSSLSASGISVSTPRVSPFEPERNMQVQSSQHLEANVQSPVSSQTTYATPSAYAVPQESEIELHESEMVPQKPKKKKRSRRNRKASRKKIPATQSSSADMDTLHVCPTCGSCSDSKKPQSNKKHRGRRVKHSPKSTLEVPDGIPDIKALSASMGSSSQHASRYNEGRGSFDTLGTHYHLSKSRKSSSSDSLYSVSSMSIKNDSNSDSLSSSSSSDVSGSDENLPIDKTLYLSVEDPSFMVHPRRPSATKSCSAAVDCPHTTIPKPPYQSDTDLTELPTKSTAQFSDETFTVQPRLKSTHSSIADNEDREVDSQVDENTRVVEEDVCFPMQEESHVNKGIDFDELDNFAEEELQKQRQNTDHFRSRQYSTCKPFEPHWNDLSPHDPNDPSSSLHSNNAEKAAEVPLRSSYYSGGRRSVTSMSDSPYRFSFFSSNQNETIHASVLSDLLDDGATSFRSLFCPEKGVWWLDCLDPTDIEMRVLSKAFSIHPLTTEDIRVQEAREKVELFGSYYFVCFRSFEQDPELANYLEPLNMYIVVFREGLLTFHFSSATHPASVRRRARQLRDYVHVSSDWLCYALIDDITDAFVPLIRGIETETEAIEDSVLVGRSEDSSDMLRRIGECRKKTMGMFRLLYGKADVIKMLAKRCNEKWTIAPTGEIGLYLGDIQDHLVTMTSNLSQFEKILSRTHSNYLAQLTSNSIEENSRTNGALGKITLIGTLLVPMNLVTGLFGMNVPVPGRDTNNLAWFFGILGVLLGSIAIGWIITMRYNAF.

The segment covering 1–20 (MSFQQPSNGAQGGNNNALEK) has biased composition (polar residues). Residues 1-255 (MSFQQPSNGA…SSDVSGSDEN (255 aa)) form a disordered region. Low complexity predominate over residues 21-45 (TSSNEATSSSSTQVSSLSASGISVS). The span at 58–82 (MQVQSSQHLEANVQSPVSSQTTYAT) shows a compositional bias: polar residues. 2 stretches are compositionally biased toward basic residues: residues 105–123 (KPKK…RKKI) and 152–166 (QSNK…KHSP). 2 stretches are compositionally biased toward low complexity: residues 181 to 194 (ALSA…QHAS) and 218 to 253 (SSSS…SGSD). The residue at position 318 (Ser-318) is a Phosphoserine. Disordered stretches follow at residues 326 to 349 (PRLK…QVDE) and 406 to 431 (FEPH…NNAE). Residues 337-347 (DNEDREVDSQV) are compositionally biased toward acidic residues. The span at 406–419 (FEPHWNDLSPHDPN) shows a compositional bias: basic and acidic residues. Positions 420 to 430 (DPSSSLHSNNA) are enriched in polar residues. Phosphoserine is present on residues Ser-449 and Ser-452. The next 2 helical transmembrane spans lie at 745 to 765 (ITLI…FGMN) and 776 to 796 (LAWF…GWII).

This sequence belongs to the CorA metal ion transporter (MIT) (TC 1.A.35) family.

Its subcellular location is the cytoplasm. It localises to the membrane. The sequence is that of Putative metal ion transporter C27B12.12c from Schizosaccharomyces pombe (strain 972 / ATCC 24843) (Fission yeast).